Reading from the N-terminus, the 256-residue chain is Tumor necrosis factor receptor superfamily member 9 (256 aa).

Residues 1 to 23 (MGNNCYNVVVIVLLLVGCEKVGA) form the signal peptide. TNFR-Cys repeat units lie at residues 24–45 (VQNS…PVCK), 46–85 (SCPP…NAEC), 86–117 (ECIE…QGCK), and 118–159 (TCSL…VVCG). At 24–187 (VQNSCDNCQP…GPGGHSLQVL (164 aa)) the chain is on the extracellular side. Intrachain disulfides connect cysteine 28–cysteine 37, cysteine 31–cysteine 44, cysteine 47–cysteine 61, cysteine 64–cysteine 77, cysteine 67–cysteine 85, cysteine 87–cysteine 93, cysteine 98–cysteine 105, cysteine 101–cysteine 116, and cysteine 119–cysteine 133. N-linked (GlcNAc...) asparagine glycosylation is found at asparagine 128 and asparagine 138. An intrachain disulfide couples cysteine 139 to cysteine 158. Residues 188 to 208 (TLFLALTSALLLALIFITLLF) form a helical membrane-spanning segment. The Cytoplasmic portion of the chain corresponds to 209–256 (SVLKWIRKKFPHIFKQPFKKTTGAAQEEDACSCRCPQEEEGGGGGYEL).

As to quaternary structure, predominantly homodimeric, but may also exist as a monomer. Associates with p56-LCK. Interacts with TRAF1, TRAF2 and TRAF3. Expressed in activated thymocytes, splenic T cells, CD4(+), and CD8(+) T-cells.

The protein resides in the cell membrane. Receptor for TNFSF9/4-1BBL. Conveys a signal that enhances CD8(+) T-cell survival, cytotoxicity, and mitochondrial activity, thereby promoting immunity against viruses and tumors. The polypeptide is Tumor necrosis factor receptor superfamily member 9 (Tnfrsf9) (Mus musculus (Mouse)).